A 314-amino-acid polypeptide reads, in one-letter code: Carbamate kinase (314 aa).

Belongs to the carbamate kinase family. Homodimer.

Its subcellular location is the cytoplasm. The enzyme catalyses hydrogencarbonate + NH4(+) + ATP = carbamoyl phosphate + ADP + H2O + H(+). Its pathway is metabolic intermediate metabolism; carbamoyl phosphate degradation; CO(2) and NH(3) from carbamoyl phosphate: step 1/1. The sequence is that of Carbamate kinase (arcC) from Clostridium perfringens (strain 13 / Type A).